A 583-amino-acid polypeptide reads, in one-letter code: 2-succinyl-5-enolpyruvyl-6-hydroxy-3-cyclohexene-1-carboxylate synthase (583 aa).

The protein belongs to the TPP enzyme family. MenD subfamily. In terms of assembly, homodimer. Mg(2+) serves as cofactor. Requires Mn(2+) as cofactor. It depends on thiamine diphosphate as a cofactor.

It carries out the reaction isochorismate + 2-oxoglutarate + H(+) = 5-enolpyruvoyl-6-hydroxy-2-succinyl-cyclohex-3-ene-1-carboxylate + CO2. Its pathway is quinol/quinone metabolism; 1,4-dihydroxy-2-naphthoate biosynthesis; 1,4-dihydroxy-2-naphthoate from chorismate: step 2/7. It functions in the pathway quinol/quinone metabolism; menaquinone biosynthesis. Its function is as follows. Catalyzes the thiamine diphosphate-dependent decarboxylation of 2-oxoglutarate and the subsequent addition of the resulting succinic semialdehyde-thiamine pyrophosphate anion to isochorismate to yield 2-succinyl-5-enolpyruvyl-6-hydroxy-3-cyclohexene-1-carboxylate (SEPHCHC). The chain is 2-succinyl-5-enolpyruvyl-6-hydroxy-3-cyclohexene-1-carboxylate synthase from Chlorobaculum parvum (strain DSM 263 / NCIMB 8327) (Chlorobium vibrioforme subsp. thiosulfatophilum).